The following is a 418-amino-acid chain: N-acetylglucosamine-6-phosphate deacetylase (418 aa).

Glu154 lines the a divalent metal cation pocket. 165 to 166 (CH) is a substrate binding site. Residues His223 and His244 each coordinate a divalent metal cation. Residues 247 to 248 (NA), Arg255, and 281 to 284 (DGIH) contribute to the substrate site. Asp306 functions as the Proton donor/acceptor in the catalytic mechanism. 340–342 (TAG) provides a ligand contact to substrate.

It belongs to the metallo-dependent hydrolases superfamily. NagA family. Requires a divalent metal cation as cofactor.

The enzyme catalyses N-acetyl-D-glucosamine 6-phosphate + H2O = D-glucosamine 6-phosphate + acetate. The protein is N-acetylglucosamine-6-phosphate deacetylase of Caenorhabditis elegans.